Consider the following 476-residue polypeptide: Aspartyl/glutamyl-tRNA(Asn/Gln) amidotransferase subunit B (476 aa).

It belongs to the GatB/GatE family. GatB subfamily. Heterotrimer of A, B and C subunits.

It carries out the reaction L-glutamyl-tRNA(Gln) + L-glutamine + ATP + H2O = L-glutaminyl-tRNA(Gln) + L-glutamate + ADP + phosphate + H(+). The catalysed reaction is L-aspartyl-tRNA(Asn) + L-glutamine + ATP + H2O = L-asparaginyl-tRNA(Asn) + L-glutamate + ADP + phosphate + 2 H(+). In terms of biological role, allows the formation of correctly charged Asn-tRNA(Asn) or Gln-tRNA(Gln) through the transamidation of misacylated Asp-tRNA(Asn) or Glu-tRNA(Gln) in organisms which lack either or both of asparaginyl-tRNA or glutaminyl-tRNA synthetases. The reaction takes place in the presence of glutamine and ATP through an activated phospho-Asp-tRNA(Asn) or phospho-Glu-tRNA(Gln). The sequence is that of Aspartyl/glutamyl-tRNA(Asn/Gln) amidotransferase subunit B from Clostridium botulinum (strain Okra / Type B1).